We begin with the raw amino-acid sequence, 390 residues long: Bifunctional enzyme IspD/IspF (390 aa).

The 2-C-methyl-D-erythritol 4-phosphate cytidylyltransferase stretch occupies residues 1-229; that stretch reads MAAGRGERAG…RQDHAVFPDI (229 aa). Residues 230–390 are 2-C-methyl-D-erythritol 2,4-cyclodiphosphate synthase; the sequence is RTGNGYDVHS…TVIYPGEVPE (161 aa). Residues aspartate 236 and histidine 238 each coordinate a divalent metal cation. 4-CDP-2-C-methyl-D-erythritol 2-phosphate contacts are provided by residues 236 to 238 and 262 to 263; these read DVH and HS. Histidine 270 serves as a coordination point for a divalent metal cation. 4-CDP-2-C-methyl-D-erythritol 2-phosphate is bound by residues 284–286, 360–363, phenylalanine 367, and arginine 370; these read DIG and TTNE.

In the N-terminal section; belongs to the IspD/TarI cytidylyltransferase family. IspD subfamily. It in the C-terminal section; belongs to the IspF family. A divalent metal cation is required as a cofactor.

It catalyses the reaction 2-C-methyl-D-erythritol 4-phosphate + CTP + H(+) = 4-CDP-2-C-methyl-D-erythritol + diphosphate. The catalysed reaction is 4-CDP-2-C-methyl-D-erythritol 2-phosphate = 2-C-methyl-D-erythritol 2,4-cyclic diphosphate + CMP. It functions in the pathway isoprenoid biosynthesis; isopentenyl diphosphate biosynthesis via DXP pathway; isopentenyl diphosphate from 1-deoxy-D-xylulose 5-phosphate: step 2/6. Its pathway is isoprenoid biosynthesis; isopentenyl diphosphate biosynthesis via DXP pathway; isopentenyl diphosphate from 1-deoxy-D-xylulose 5-phosphate: step 4/6. Bifunctional enzyme that catalyzes the formation of 4-diphosphocytidyl-2-C-methyl-D-erythritol from CTP and 2-C-methyl-D-erythritol 4-phosphate (MEP) (IspD), and catalyzes the conversion of 4-diphosphocytidyl-2-C-methyl-D-erythritol 2-phosphate (CDP-ME2P) to 2-C-methyl-D-erythritol 2,4-cyclodiphosphate (ME-CPP) with a corresponding release of cytidine 5-monophosphate (CMP) (IspF). The chain is Bifunctional enzyme IspD/IspF from Brucella abortus biovar 1 (strain 9-941).